Reading from the N-terminus, the 293-residue chain is Acetylglutamate kinase (293 aa).

Residues 70–71, Arg92, and Asn186 each bind substrate; that span reads GG.

The protein belongs to the acetylglutamate kinase family. ArgB subfamily.

It is found in the cytoplasm. The catalysed reaction is N-acetyl-L-glutamate + ATP = N-acetyl-L-glutamyl 5-phosphate + ADP. Its pathway is amino-acid biosynthesis; L-arginine biosynthesis; N(2)-acetyl-L-ornithine from L-glutamate: step 2/4. Its function is as follows. Catalyzes the ATP-dependent phosphorylation of N-acetyl-L-glutamate. The protein is Acetylglutamate kinase of Synechococcus sp. (strain CC9605).